Here is a 210-residue protein sequence, read N- to C-terminus: N-(5'-phosphoribosyl)anthranilate isomerase (210 aa).

The protein belongs to the TrpF family.

The enzyme catalyses N-(5-phospho-beta-D-ribosyl)anthranilate = 1-(2-carboxyphenylamino)-1-deoxy-D-ribulose 5-phosphate. The protein operates within amino-acid biosynthesis; L-tryptophan biosynthesis; L-tryptophan from chorismate: step 3/5. This is N-(5'-phosphoribosyl)anthranilate isomerase from Magnetococcus marinus (strain ATCC BAA-1437 / JCM 17883 / MC-1).